The chain runs to 254 residues: MVPWLGPDDPFPPVERALGPATGAPGLLAASADLLPSRLIEAYLRGIFPWYSDGQPVLWWSPDPRMILAPAEFKVSPSLRKTLRRVLREPAWEVRVDHDFAGVMRACAQAPRRGQRGTWITAEIIDAYTSLYRSGNAHSIETWHDGRRIGGLYGVAFGRMFFGESMYADATDASKIALATLVAHLREQGLEMIDCQQNTSHLASLGGREIARKAFVAHVRRAVAEPPIPWQFDKRVLAALTGPAEPAAPSGIER.

This sequence belongs to the L/F-transferase family.

The protein localises to the cytoplasm. It carries out the reaction N-terminal L-lysyl-[protein] + L-leucyl-tRNA(Leu) = N-terminal L-leucyl-L-lysyl-[protein] + tRNA(Leu) + H(+). The enzyme catalyses N-terminal L-arginyl-[protein] + L-leucyl-tRNA(Leu) = N-terminal L-leucyl-L-arginyl-[protein] + tRNA(Leu) + H(+). It catalyses the reaction L-phenylalanyl-tRNA(Phe) + an N-terminal L-alpha-aminoacyl-[protein] = an N-terminal L-phenylalanyl-L-alpha-aminoacyl-[protein] + tRNA(Phe). In terms of biological role, functions in the N-end rule pathway of protein degradation where it conjugates Leu, Phe and, less efficiently, Met from aminoacyl-tRNAs to the N-termini of proteins containing an N-terminal arginine or lysine. The chain is Leucyl/phenylalanyl-tRNA--protein transferase from Burkholderia ambifaria (strain MC40-6).